Here is a 352-residue protein sequence, read N- to C-terminus: Tubby-like F-box protein 10 (352 aa).

Basic and acidic residues predominate over residues 1–11; sequence MAAVREPREEA. The interval 1-23 is disordered; it reads MAAVREPREEAAVGEGEGEEEGR. One can recognise an F-box domain in the interval 22-78; sequence GRWGGLLPELVEEVVRRVEASGGERWPARKDLVSCACVCRRWREAAAAVVRPLPESG.

This sequence belongs to the TUB family. As to expression, ubiquitous.

The polypeptide is Tubby-like F-box protein 10 (TULP10) (Oryza sativa subsp. japonica (Rice)).